Consider the following 369-residue polypeptide: MSIDFQQLPHAGIRSLIPYVPGKSIEELAKEKGITDIIKLASNENPLGCSPLALSVIQTMSSHYIATYPSPWNHPLMSKLASYLKVKPEQLFLSNGSDYLFNILLNCFALHTDRHILTHDYAFSTYAIQANSLQIPINSVPIGHNWEVNITDIVNACNQQTGIIFIANPNNPTGVLIQQEEIKYLLEQIPKSTLLVLDEAYYEFAASQLTVNSLDWLEEHPNLVVTRTFSKIYGMAGLRLGYAIANPSIINILKRVQLPFIVNQVALAAAYAAIDDDDFIQSSLKMNNEGMLQLQAGFNELNIKYLPSSCNFLTFDCEEDSMALYNYLLDNGIIVRPLHAYKMNNFIRVTIGTKEQNSRFLTALKNFYL.

Residue Lys231 is modified to N6-(pyridoxal phosphate)lysine.

This sequence belongs to the class-II pyridoxal-phosphate-dependent aminotransferase family. Histidinol-phosphate aminotransferase subfamily. As to quaternary structure, homodimer. Requires pyridoxal 5'-phosphate as cofactor.

The catalysed reaction is L-histidinol phosphate + 2-oxoglutarate = 3-(imidazol-4-yl)-2-oxopropyl phosphate + L-glutamate. It participates in amino-acid biosynthesis; L-histidine biosynthesis; L-histidine from 5-phospho-alpha-D-ribose 1-diphosphate: step 7/9. The chain is Histidinol-phosphate aminotransferase 2 from Legionella pneumophila subsp. pneumophila (strain Philadelphia 1 / ATCC 33152 / DSM 7513).